A 590-amino-acid polypeptide reads, in one-letter code: MINRNEINENDKWDLSFLFANEEEYVKTINAIEIKTKEFKKYEKLELNFDLFKETLNKYYEIMEDLEKVSYYAMLQLETDVTNKDSNKIYSICVNLATKVSNTTSYFMPKILKTDEKKIQAWINDPELKDKKIAIEKILREKKHILSEQEEKILANYTPLYTSYQSIFSALTNADMEFGEINKHPLTNSTYTLFLQNEDQKIRKEAFLRFYQKYKNNENTLANLIISDFKKNHFIAKTRRFQNTFSMQLFSNNIDKKVYTNLIETVNENLPVLNDYYEFRKKVLNQEYLYHYDVYVPLTKGIIFKNSFEDACEKILKSLEVLGNEYTKILRNGLLKERWVDKYENTGKRSGAFSAGSYNGKPYILLNYKDESIRDMFTLAHEAGHSMHSYFSIKNNPFPHYNYSIFEAEIASIINEQILAEYLLKNETDTNKIKYIKLTQIDDMISTFFRQTMFAEFEYIIHEMISKEEPVVKETLTETYMNLLKKYFGPSLKFDELSPLECLRIPHFYSPFYVYQYATGIAAALSIYKGIKENKKDAVENYIKFLKTGGSKYPLDSLNITGVDLTKKATIENTINIFKCRLEEIKKIFQ.

A Zn(2+)-binding site is contributed by H381. Residue E382 is part of the active site. Zn(2+)-binding residues include H385 and H388.

It belongs to the peptidase M3B family. Zn(2+) is required as a cofactor.

In Borreliella burgdorferi (strain ATCC 35210 / DSM 4680 / CIP 102532 / B31) (Borrelia burgdorferi), this protein is Oligoendopeptidase F homolog (pepF).